The primary structure comprises 415 residues: Squalene synthase 10 (415 aa).

A run of 2 helical transmembrane segments spans residues 281–301 (AIFRFCAIPQIMAIGTLALCF) and 392–412 (LIVILFIILAILYAYLSSNLP).

Belongs to the phytoene/squalene synthase family. Mg(2+) is required as a cofactor. The cofactor is Mn(2+).

It localises to the endoplasmic reticulum membrane. The enzyme catalyses 2 (2E,6E)-farnesyl diphosphate + NADH + H(+) = squalene + 2 diphosphate + NAD(+). It carries out the reaction 2 (2E,6E)-farnesyl diphosphate + NADPH + H(+) = squalene + 2 diphosphate + NADP(+). It participates in terpene metabolism; lanosterol biosynthesis; lanosterol from farnesyl diphosphate: step 1/3. Its function is as follows. Component of the triterpene saponins (e.g. ginsenosides or panaxosides) and phytosterols biosynthetic pathways. Catalyzes the biosynthesis of squalene. This is Squalene synthase 10 from Panax ginseng (Korean ginseng).